Here is a 331-residue protein sequence, read N- to C-terminus: UDP-GalNAc:beta-1,3-N-acetylgalactosaminyltransferase 1 (331 aa).

Residues 1 to 20 (MAPAVLTAIPNRMSLRSLKW) are Cytoplasmic-facing. Residues 21 to 43 (SLLLLSLLSFLVIWYLSLPHYNV) form a helical; Signal-anchor for type II membrane protein membrane-spanning segment. Residues 44–331 (IERVNWMYFY…VMLRNTTCHY (288 aa)) lie on the Lumenal side of the membrane. N-linked (GlcNAc...) asparagine glycosylation is found at asparagine 72, asparagine 154, asparagine 198, asparagine 212, and asparagine 326.

The protein belongs to the glycosyltransferase 31 family. Mg(2+) is required as a cofactor.

Its subcellular location is the golgi apparatus membrane. The enzyme catalyses a globoside Gb3Cer (d18:1(4E)) + UDP-N-acetyl-alpha-D-galactosamine = a globoside Gb4Cer (d18:1(4E)) + UDP + H(+). It functions in the pathway protein modification; protein glycosylation. In terms of biological role, transfers N-acetylgalactosamine onto globotriaosylceramide. Plays a critical role in preimplantation stage embryonic development. This Rattus norvegicus (Rat) protein is UDP-GalNAc:beta-1,3-N-acetylgalactosaminyltransferase 1 (B3galnt1).